We begin with the raw amino-acid sequence, 110 residues long: Small ribosomal subunit protein bS16 (110 aa).

Basic and acidic residues predominate over residues Val-82–Gln-103. The disordered stretch occupies residues Val-82–Gly-110.

It belongs to the bacterial ribosomal protein bS16 family.

This Bradyrhizobium sp. (strain ORS 278) protein is Small ribosomal subunit protein bS16.